Here is a 388-residue protein sequence, read N- to C-terminus: Mannitol-1-phosphate 5-dehydrogenase (388 aa).

Position 5–16 (5–16) interacts with NAD(+); the sequence is AIQFGGGNIGRG. Residue K213 is part of the active site.

Belongs to the mannitol dehydrogenase family. Monomer.

It carries out the reaction D-mannitol 1-phosphate + NAD(+) = beta-D-fructose 6-phosphate + NADH + H(+). In terms of biological role, catalyzes the NAD(H)-dependent interconversion of D-fructose 6-phosphate and D-mannitol 1-phosphate in the metabolism of mannitol. Has a strong preference for NADH over NADPH. The protein is Mannitol-1-phosphate 5-dehydrogenase (mpdA) of Aspergillus niger (strain ATCC MYA-4892 / CBS 513.88 / FGSC A1513).